Here is a 436-residue protein sequence, read N- to C-terminus: Na(+)/H(+) antiporter NhaA (436 aa).

11 consecutive transmembrane segments (helical) span residues 14 to 34 (AGGI…NSTW), 59 to 79 (LHHW…GLEL), 95 to 115 (ALPV…YHQF), 125 to 145 (WGIP…LLAW), 152 to 172 (IIFL…VIAI), 176 to 196 (PALH…LLLF), 214 to 234 (FWYF…FLAF), 300 to 320 (AIQP…NAGI), 336 to 356 (IGTC…SSWL), 374 to 394 (LLGA…IGQL), and 407 to 427 (LGIL…LFQV).

Belongs to the NhaA Na(+)/H(+) (TC 2.A.33) antiporter family.

The protein resides in the cell inner membrane. It carries out the reaction Na(+)(in) + 2 H(+)(out) = Na(+)(out) + 2 H(+)(in). In terms of biological role, na(+)/H(+) antiporter that extrudes sodium in exchange for external protons. The chain is Na(+)/H(+) antiporter NhaA from Acidithiobacillus ferrooxidans (strain ATCC 23270 / DSM 14882 / CIP 104768 / NCIMB 8455) (Ferrobacillus ferrooxidans (strain ATCC 23270)).